A 78-amino-acid chain; its full sequence is MKDFLAYIIKNLVDRPEEVHIKEVQGTHTIIYELTVAKPDIGKIIGKEGRTIKAIRTLLVSVASRNNVKVSLEIMEDK.

The KH domain occupies 29-78 (TIIYELTVAKPDIGKIIGKEGRTIKAIRTLLVSVASRNNVKVSLEIMEDK).

Belongs to the KhpA RNA-binding protein family.

It is found in the cytoplasm. Its function is as follows. A probable RNA-binding protein. The sequence is that of RNA-binding protein KhpA from Chlamydia caviae (strain ATCC VR-813 / DSM 19441 / 03DC25 / GPIC) (Chlamydophila caviae).